Here is a 114-residue protein sequence, read N- to C-terminus: MARLRIINFYRSAYCSAMSEFRLPGEGEILGKVIEMLGDGRFKVICADGQIRVARLPGRLRRRLWLKAGDYVIVALWDFDREKGDIVHKYEKRDVEELKRRGFAEAIEALDSYA.

In terms of domain architecture, S1-like spans 19–91 (SEFRLPGEGE…EKGDIVHKYE (73 aa)).

The protein belongs to the eIF-1A family.

Functionally, seems to be required for maximal rate of protein biosynthesis. Enhances ribosome dissociation into subunits and stabilizes the binding of the initiator Met-tRNA(I) to 40 S ribosomal subunits. This chain is Translation initiation factor 1A (eIF1A), found in Pyrobaculum aerophilum (strain ATCC 51768 / DSM 7523 / JCM 9630 / CIP 104966 / NBRC 100827 / IM2).